Here is a 342-residue protein sequence, read N- to C-terminus: MSAFTPASEVLLRHSDDFEQSRILFAGDLQDDLPARFECAASRAHTQQFHHWQVLSRQMGDNVRFSLVAQASDVADCDTLIYYWPKNKPEAQFQLMNILSLMPSGVDVFVVGENRSGVRSAEPMLADYAPLNKVDSARRCGLYHGRLEKQPQFSLESWWAEYNIDGLTIKTLPGVFSRDGLDVGSQLLLSTLTPHTKGKVLDVGCGAGVLSAALASHSPKVRLTLCDVSAPAVEASRATLAANGLEGEVFASNVFSEVKGRFDMIISNPPFHDGMQTSLDAAQTLIRGAVRHLNSGGELRIVANAFLPYPKILDETFGFHEVIAQTGRFKVYRTVMTRQAKK.

The protein belongs to the methyltransferase superfamily. RsmC family. As to quaternary structure, monomer.

The protein resides in the cytoplasm. It catalyses the reaction guanosine(1207) in 16S rRNA + S-adenosyl-L-methionine = N(2)-methylguanosine(1207) in 16S rRNA + S-adenosyl-L-homocysteine + H(+). Its function is as follows. Specifically methylates the guanine in position 1207 of 16S rRNA in the 30S particle. This is Ribosomal RNA small subunit methyltransferase C from Salmonella enteritidis PT4 (strain P125109).